Reading from the N-terminus, the 343-residue chain is Follistatin (343 aa).

Positions 1–28 are cleaved as a signal peptide; it reads MLNQRIHPGMLVLLMFLYHFMEDHTAQA. The region spanning 29-102 is the TB domain; the sequence is GNCWLRQARN…TCENVDCGPG (74 aa). 8 disulfides stabilise this stretch: Cys31-Cys54, Cys41-Cys87, Cys55-Cys90, Cys94-Cys105, Cys99-Cys115, Cys117-Cys149, Cys121-Cys142, and Cys131-Cys163. A Follistatin-like 1 domain is found at 93-116; that stretch reads TCENVDCGPGKKCKMNKKNKPRCV. Kazal-like domains are found at residues 99–165, 185–240, and 263–317; these read CGPG…KCKK, NAYC…KCIK, and RGRC…SCNS. Asn123 carries N-linked (GlcNAc...) asparagine glycosylation. A Follistatin-like 2 domain is found at 166-189; the sequence is TCRDVLCPGSSTCVVDQTNNAYCV. Cystine bridges form between Cys191–Cys224, Cys195–Cys217, and Cys206–Cys238. The Follistatin-like 3 domain occupies 243 to 267; it reads SCEDIQCSAGKKCLWDFKVGRGRCA. 3 disulfide bridges follow: Cys269–Cys301, Cys273–Cys294, and Cys283–Cys315. A glycan (N-linked (GlcNAc...) asparagine) is linked at Asn287. The disordered stretch occupies residues 315-343; the sequence is CNSINEDPEEEEEDEDQDYSFPISSILEW. The segment covering 320 to 332 has biased composition (acidic residues); sequence EDPEEEEEDEDQD.

In terms of assembly, monomer. In terms of tissue distribution, ciliary ganglion neurons. Levels are higher in the iris than the choroid.

It is found in the secreted. Its function is as follows. Binds directly to activin and functions as an activin antagonist. Inhibits activin A signaling in the iris and regulates somatostatin phenotype in ciliary ganglion neurons. Specific inhibitor of the biosynthesis and secretion of pituitary follicle stimulating hormone (FSH). This chain is Follistatin (FST), found in Gallus gallus (Chicken).